Reading from the N-terminus, the 604-residue chain is Sulfite reductase [NADPH] flavoprotein alpha-component (604 aa).

The Flavodoxin-like domain maps to 66-204 (VTVLSASQTG…AADGWTGRIV (139 aa)). Residues 72–77 (SQTGNA), 119–122 (STQG), and 155–164 (LGDSSYPNFC) contribute to the FMN site. The tract at residues 212–231 (AKNRATPAPQTTPPAGLQTA) is disordered. The segment covering 216–231 (ATPAPQTTPPAGLQTA) has biased composition (low complexity). In terms of domain architecture, FAD-binding FR-type spans 239 to 453 (ADPFPAALLA…VERNDGFRLP (215 aa)). FAD is bound by residues Thr-327, Gln-361, 391–394 (RLYS), 409–411 (TVG), and 424–427 (GGAS). NADP(+) contacts are provided by residues 524–525 (SR), 530–534 (KIYVQ), and Asp-566. Tyr-604 lines the FAD pocket.

Belongs to the NADPH-dependent sulphite reductase flavoprotein subunit CysJ family. It in the N-terminal section; belongs to the flavodoxin family. This sequence in the C-terminal section; belongs to the flavoprotein pyridine nucleotide cytochrome reductase family. As to quaternary structure, alpha(8)-beta(8). The alpha component is a flavoprotein, the beta component is a hemoprotein. The cofactor is FAD. FMN is required as a cofactor.

It carries out the reaction hydrogen sulfide + 3 NADP(+) + 3 H2O = sulfite + 3 NADPH + 4 H(+). Its pathway is sulfur metabolism; hydrogen sulfide biosynthesis; hydrogen sulfide from sulfite (NADPH route): step 1/1. Component of the sulfite reductase complex that catalyzes the 6-electron reduction of sulfite to sulfide. This is one of several activities required for the biosynthesis of L-cysteine from sulfate. The flavoprotein component catalyzes the electron flow from NADPH -&gt; FAD -&gt; FMN to the hemoprotein component. The chain is Sulfite reductase [NADPH] flavoprotein alpha-component from Neisseria meningitidis serogroup C / serotype 2a (strain ATCC 700532 / DSM 15464 / FAM18).